A 111-amino-acid polypeptide reads, in one-letter code: Putative ciliary rootlet coiled-coil protein-like 1 protein (111 aa).

Residues 21 to 86 (MELELSVTKL…RQAEQEATVA (66 aa)) are a coiled coil.

Belongs to the rootletin family.

This is Putative ciliary rootlet coiled-coil protein-like 1 protein (CROCCP2) from Homo sapiens (Human).